We begin with the raw amino-acid sequence, 286 residues long: Meteorin-like protein (286 aa).

The N-terminal stretch at 1 to 20 is a signal peptide; the sequence is MLRRGLLSFFMVILIDRGTS. 5 cysteine pairs are disulfide-bonded: Cys-28–Cys-51, Cys-84–Cys-120, Cys-165–Cys-235, Cys-168–Cys-259, and Cys-178–Cys-281. The N-linked (GlcNAc...) asparagine glycan is linked to Asn-203.

It belongs to the meteorin family.

Its subcellular location is the secreted. Its function is as follows. Hormone induced following exercise or cold exposure that promotes energy expenditure. Induced either in the skeletal muscle after exercise or in adipose tissue following cold exposure and is present in the circulation. Able to stimulate energy expenditure associated with the browning of the white fat depots and improves glucose tolerance. The sequence is that of Meteorin-like protein (metrnl) from Xenopus laevis (African clawed frog).